Here is a 60-residue protein sequence, read N- to C-terminus: MINNEAFNLSLEQKFQLQCLQQEYQELDREQTVNYLLETMQQIMVRDNLIRDLMKNSLLP.

This sequence to Synechococcus PCC 7942 NblA and some, to chloroplast ycf18.

The polypeptide is Phycobilisome degradation protein NblA homolog 2 (Synechocystis sp. (strain ATCC 27184 / PCC 6803 / Kazusa)).